The chain runs to 122 residues: Small ribosomal subunit protein uS13 (122 aa).

The interval 95 to 122 (GLPVHGQRTHTNARTRKGPRKGAVGKKK) is disordered.

It belongs to the universal ribosomal protein uS13 family. In terms of assembly, part of the 30S ribosomal subunit. Forms a loose heterodimer with protein S19. Forms two bridges to the 50S subunit in the 70S ribosome.

Functionally, located at the top of the head of the 30S subunit, it contacts several helices of the 16S rRNA. In the 70S ribosome it contacts the 23S rRNA (bridge B1a) and protein L5 of the 50S subunit (bridge B1b), connecting the 2 subunits; these bridges are implicated in subunit movement. Contacts the tRNAs in the A and P-sites. The polypeptide is Small ribosomal subunit protein uS13 (Lawsonia intracellularis (strain PHE/MN1-00)).